Consider the following 211-residue polypeptide: Probable nicotinate-nucleotide adenylyltransferase (211 aa).

The protein belongs to the NadD family.

It catalyses the reaction nicotinate beta-D-ribonucleotide + ATP + H(+) = deamido-NAD(+) + diphosphate. The protein operates within cofactor biosynthesis; NAD(+) biosynthesis; deamido-NAD(+) from nicotinate D-ribonucleotide: step 1/1. Functionally, catalyzes the reversible adenylation of nicotinate mononucleotide (NaMN) to nicotinic acid adenine dinucleotide (NaAD). This chain is Probable nicotinate-nucleotide adenylyltransferase, found in Legionella pneumophila (strain Corby).